The following is a 175-amino-acid chain: Large ribosomal subunit protein bL17m (175 aa).

The transit peptide at 1–8 directs the protein to the mitochondrion; it reads MRLSVAAA. Residues 155-175 are disordered; it reads DLRQSQEASNHSSHTAQTPGI. The span at 161–175 shows a compositional bias: polar residues; it reads EASNHSSHTAQTPGI.

Belongs to the bacterial ribosomal protein bL17 family. As to quaternary structure, component of the mitochondrial large ribosomal subunit (mt-LSU). Mature mammalian 55S mitochondrial ribosomes consist of a small (28S) and a large (39S) subunit. The 28S small subunit contains a 12S ribosomal RNA (12S mt-rRNA) and 30 different proteins. The 39S large subunit contains a 16S rRNA (16S mt-rRNA), a copy of mitochondrial valine transfer RNA (mt-tRNA(Val)), which plays an integral structural role, and 52 different proteins. Detected in adrenal gland, mammary gland and adipose tissue.

It localises to the mitochondrion. This Homo sapiens (Human) protein is Large ribosomal subunit protein bL17m (MRPL17).